The following is a 248-amino-acid chain: Phosphomannomutase (248 aa).

Catalysis depends on D14, which acts as the Nucleophile. 2 residues coordinate Mg(2+): D14 and D16. Residue D16 is the Proton donor/acceptor of the active site. The alpha-D-mannose 1-phosphate site is built by R23, R125, R136, R143, S181, and D183. 3 residues coordinate Mg(2+): D209, F221, and T226.

The protein belongs to the eukaryotic PMM family. In terms of assembly, homodimer. Mg(2+) is required as a cofactor.

It localises to the cytoplasm. The enzyme catalyses alpha-D-mannose 1-phosphate = D-mannose 6-phosphate. Its pathway is nucleotide-sugar biosynthesis; GDP-alpha-D-mannose biosynthesis; alpha-D-mannose 1-phosphate from D-fructose 6-phosphate: step 2/2. Its function is as follows. Catalyzes the interconversion of mannose-6-phosphate to mannose-1-phosphate, the precursor for the synthesis of GDP-mannose. GDP-mannose is an essential sugar nucleotide for the synthesis of D-mannose-containing cell wall polysaccharides (galactomannans and glucomannans), glycolipids, glycoproteins and the antioxidant L-ascorbate. This chain is Phosphomannomutase, found in Oryza sativa subsp. indica (Rice).